A 1371-amino-acid polypeptide reads, in one-letter code: Perilipin-4 (1371 aa).

A compositionally biased stretch (basic and acidic residues) spans 1–13; it reads MSAPDEGRRDPPK. The disordered stretch occupies residues 1–22; the sequence is MSAPDEGRRDPPKPKGKTLGSF. Residues Ser25 and Ser31 each carry the phosphoserine modification. The disordered stretch occupies residues 37 to 86; it reads ANAHSSARARPAADPTGAPAAEAAQPQAQVAAHPEQTAPWTEKELQPSEK. The span at 44–72 shows a compositional bias: low complexity; that stretch reads RARPAADPTGAPAAEAAQPQAQVAAHPEQ. Repeat copies occupy residues 109–141, 142–174, 175–207, 208–240, 241–273, 274–306, 307–339, 340–372, 373–405, 406–438, 439–471, 472–504, 505–537, 538–570, 571–603, 604–636, 637–669, 670–702, 703–735, 736–768, 769–801, 802–834, 835–867, 868–900, 901–933, 934–966, and 967–999. The interval 109–999 is 27 X 33 AA approximate tandem repeat; the sequence is GVASVVDVAK…LMGTKDTVFS (891 aa). A compositionally biased stretch (polar residues) spans 1060 to 1083; that stretch reads PATSWGGLTSSRTTDNGGEQTALS. 2 disordered regions span residues 1060-1093 and 1240-1260; these read PATS…SGIS and QAPE…EDAA.

Belongs to the perilipin family.

It localises to the cell membrane. It is found in the cytoplasm. Its subcellular location is the lipid droplet. In terms of biological role, may play a role in triacylglycerol packaging into adipocytes. May function as a coat protein involved in the biogenesis of lipid droplets. This Homo sapiens (Human) protein is Perilipin-4.